The sequence spans 363 residues: Histidine biosynthesis bifunctional protein HisB (363 aa).

The segment at 1 to 174 is histidinol-phosphatase; sequence MTQPTLFIDR…AVTNIGDRQP (174 aa). The Nucleophile role is filled by aspartate 9. Mg(2+) is bound by residues aspartate 9 and aspartate 11. The active-site Proton donor is the aspartate 11. Positions 92, 94, 100, and 102 each coordinate Zn(2+). Residue aspartate 129 participates in Mg(2+) binding. The imidazoleglycerol-phosphate dehydratase stretch occupies residues 175 to 363; that stretch reads RYAEVVRKTK…NELPSSKGVL (189 aa).

It in the N-terminal section; belongs to the histidinol-phosphatase family. This sequence in the C-terminal section; belongs to the imidazoleglycerol-phosphate dehydratase family. Mg(2+) serves as cofactor. It depends on Zn(2+) as a cofactor.

Its subcellular location is the cytoplasm. It carries out the reaction D-erythro-1-(imidazol-4-yl)glycerol 3-phosphate = 3-(imidazol-4-yl)-2-oxopropyl phosphate + H2O. It catalyses the reaction L-histidinol phosphate + H2O = L-histidinol + phosphate. It participates in amino-acid biosynthesis; L-histidine biosynthesis; L-histidine from 5-phospho-alpha-D-ribose 1-diphosphate: step 6/9. It functions in the pathway amino-acid biosynthesis; L-histidine biosynthesis; L-histidine from 5-phospho-alpha-D-ribose 1-diphosphate: step 8/9. The chain is Histidine biosynthesis bifunctional protein HisB from Actinobacillus pleuropneumoniae serotype 5b (strain L20).